Consider the following 637-residue polypeptide: Sodium-dependent nutrient amino acid transporter 1 (637 aa).

Polar residues predominate over residues 1–17 (MELKTMPQNGANAGTQH). Residues 1 to 39 (MELKTMPQNGANAGTQHNNNSNNKPDNNEKEAQKKEPER) are disordered. Residues 1 to 47 (MELKTMPQNGANAGTQHNNNSNNKPDNNEKEAQKKEPERTNWSNGLE) lie on the Cytoplasmic side of the membrane. Over residues 26–39 (DNNEKEAQKKEPER) the composition is skewed to basic and acidic residues. The next 3 helical transmembrane spans lie at 48–68 (FLMS…FPFT), 75–95 (GAFL…MYYL), and 128–148 (TICI…YLFV). Asn-181 and Asn-195 each carry an N-linked (GlcNAc...) asparagine glycan. 9 helical membrane-spanning segments follow: residues 225-245 (PDWK…LVIM), 254-274 (AAYF…GRAV), 303-323 (AVVQ…MFAS), 337-357 (IVTT…FAIL), 397-417 (LFSA…IVAL), 443-463 (ICGF…ILTL), 470-490 (TYVV…IYGL), 515-535 (FFTP…ISPI), and 549-569 (AGWV…WWYI).

This sequence belongs to the sodium:neurotransmitter symporter (SNF) (TC 2.A.22) family.

It is found in the membrane. Unusual broad substrate spectrum amino acid:sodium cotransporter that promotes absorption of the D isomers of essential amino acids. Neutral amino acids are the preferred substrates, especially methionine and phenylalanine. This Drosophila virilis (Fruit fly) protein is Sodium-dependent nutrient amino acid transporter 1.